The primary structure comprises 700 residues: Suprabasin (700 aa).

Positions 1–23 (MYLVSLLSSCCLLVLLGTLPARA) are cleaved as a signal peptide. Disordered regions lie at residues 133–158 (QGGS…VANK), 183–258 (HAFG…VADK), and 283–391 (HAFG…GAHH). Positions 488 to 546 (KEAEKVAHGVQNGVNQAQKEAEKVAHGVQNGVNQAQKEAEKVAHGVQNGVNQAQKEAEK) form a coiled coil. Residues 641–654 (GVNQPSKEANQLLN) show a composition bias toward polar residues. The disordered stretch occupies residues 641-669 (GVNQPSKEANQLLNGSHQGQGGYGGQHGG). The segment covering 658–668 (QGQGGYGGQHG) has biased composition (gly residues).

In terms of tissue distribution, detected in epidermis, in suprabasal keratinocytes. Detected in suprabasal layers of embryonic epidermis and in stratified layers of embryonic tongue and palate. Detected in adult stomach.

It is found in the secreted. This is Suprabasin (Sbsn) from Mus musculus (Mouse).